The following is a 598-amino-acid chain: Nuclear receptor subfamily 4immunitygroup A member 1 (598 aa).

Disordered regions lie at residues 1-44 (MPCI…EAAP), 131-158 (YYGS…DGSF), 177-206 (LPKA…AQSP), and 221-265 (GESY…GSEG). Low complexity predominate over residues 134–145 (SPCSAPSPSTPS). Residues 171–466 (RAWTEQLPKA…PGEGKLIFCS (296 aa)) are required for nuclear import. The segment at residues 264-339 (EGRCAVCGDN…VGMVKEVVRT (76 aa)) is a DNA-binding region (nuclear receptor). 2 consecutive NR C4-type zinc fingers follow at residues 267–287 (CAVC…CEGC) and 303–327 (CLAN…FQKC). Residues 268-354 (AVCGDNASCQ…RRGRLPSKPK (87 aa)) are required for binding NBRE-containing DNA. The interval 299–361 (AKYICLANKD…KPKQPPDASP (63 aa)) is required for the interaction with RXRA. A Phosphoserine; by PKA modification is found at S341. The disordered stretch occupies residues 341-361 (SLKGRRGRLPSKPKQPPDASP). Position 351 is a phosphoserine (S351). The region spanning 360–595 (SPANLLTSLV…PIIDKIFMDT (236 aa)) is the NR LBD domain. The binds lipopolysaccharide stretch occupies residues 521–544 (PRRVEELQNRIASCLKEHVAAVAG). An AF-2 region spans residues 584 to 595 (PPPIIDKIFMDT).

Belongs to the nuclear hormone receptor family. NR4 subfamily. In terms of assembly, binds the NGFI-B response element (NBRE) as a monomer. Binds the Nur response element (NurRE), consisting of two inverse NBRE-related octanucleotide repeats separated by 6 base-pairs, as a dimer. Interacts (via N-terminus) with NLRP3 (via LRR repeat domain); the interaction is direct, requires binding of NR4A1/Nur77 to NBRE-containing dsDNA and lipopolysaccharide, and leads to non-canonical NLRP3 inflammasome activation. Interacts with GADD45GIP1. Interacts with STK11. Interacts with IFI27. Heterodimer (via DNA-binding domain) with RXRA (via C-terminus); DNA-binding of the heterodimer is enhanced by 9-cis retinoic acid. Competes for the RXRA interaction with EP300 and thereby attenuates EP300 mediated acetylation of RXRA. Interacts with NCOA1. Interacts with NCOA2. Interacts with NCOA3. Requires Zn(2+) as cofactor. In terms of processing, phosphorylated at Ser-351 by RPS6KA1 and RPS6KA3 in response to mitogenic or stress stimuli. Acetylated by p300/CBP, acetylation increases stability. Deacetylated by HDAC1. Fetal muscle and adult liver, brain and thyroid.

The protein resides in the nucleus. It localises to the cytoplasm. It is found in the cytosol. Its subcellular location is the mitochondrion. Its transcription factor activity is activated by binding cytosporone B (Csn-B) via its ligand-binding (NR LBD) domain and stimulates recruitment of coactivators NCOA1 and NCOA2, but not NCOA3, to promoters. Csn-B-binding is also accompanied by its translocation to the mitochondrion. Its transcription factor activity is activated by corticotropin-releasing hormone (CRH) and forskolin. Not activated by binding cytosporone C (Csn-C). In terms of biological role, orphan nuclear receptor. Binds the NGFI-B response element (NBRE) 5'-AAAGGTCA-3'. Binds 9-cis-retinoic acid outside of its ligand-binding (NR LBD) domain. Participates in energy homeostasis by sequestrating the kinase STK11 in the nucleus, thereby attenuating cytoplasmic AMPK activation. Regulates the inflammatory response in macrophages by regulating metabolic adaptations during inflammation, including repressing the transcription of genes involved in the citric acid cycle (TCA). Inhibits NF-kappa-B signaling by binding to low-affinity NF-kappa-B binding sites, such as at the IL2 promoter. May act concomitantly with NR4A2 in regulating the expression of delayed-early genes during liver regeneration. Plays a role in the vascular response to injury. Its function is as follows. In the cytosol, upon its detection of both bacterial lipopolysaccharide (LPS) and NBRE-containing mitochondrial DNA released by GSDMD pores during pyroptosis, it promotes non-canonical NLRP3 inflammasome activation by stimulating association of NLRP3 and NEK7. In Homo sapiens (Human), this protein is Nuclear receptor subfamily 4immunitygroup A member 1 (NR4A1).